Here is a 337-residue protein sequence, read N- to C-terminus: Inositol 2-dehydrogenase (337 aa).

This sequence belongs to the Gfo/Idh/MocA family. Homotetramer.

The enzyme catalyses myo-inositol + NAD(+) = scyllo-inosose + NADH + H(+). Functionally, involved in the oxidation of myo-inositol (MI) to 2-keto-myo-inositol (2KMI or 2-inosose). The polypeptide is Inositol 2-dehydrogenase (Burkholderia lata (strain ATCC 17760 / DSM 23089 / LMG 22485 / NCIMB 9086 / R18194 / 383)).